An 803-amino-acid chain; its full sequence is Phenylalanine--tRNA ligase beta subunit (803 aa).

Residues 39–152 (TPGFQKVVAG…PDASPGADAA (114 aa)) form the tRNA-binding domain. The B5 domain occupies 406–480 (RQPVTIELRP…RLYGYNRIPV (75 aa)). 4 residues coordinate Mg(2+): aspartate 458, aspartate 464, glutamate 467, and glutamate 468. The region spanning 709–802 (PRFPAVERDL…LEERLGASLR (94 aa)) is the FDX-ACB domain.

The protein belongs to the phenylalanyl-tRNA synthetase beta subunit family. Type 1 subfamily. As to quaternary structure, tetramer of two alpha and two beta subunits. The cofactor is Mg(2+).

The protein localises to the cytoplasm. It catalyses the reaction tRNA(Phe) + L-phenylalanine + ATP = L-phenylalanyl-tRNA(Phe) + AMP + diphosphate + H(+). This is Phenylalanine--tRNA ligase beta subunit from Moorella thermoacetica (strain ATCC 39073 / JCM 9320).